The following is a 357-amino-acid chain: Peptide chain release factor 1 (357 aa).

Q236 carries the post-translational modification N5-methylglutamine.

This sequence belongs to the prokaryotic/mitochondrial release factor family. Post-translationally, methylated by PrmC. Methylation increases the termination efficiency of RF1.

Its subcellular location is the cytoplasm. Functionally, peptide chain release factor 1 directs the termination of translation in response to the peptide chain termination codons UAG and UAA. The polypeptide is Peptide chain release factor 1 (prfA) (Mycobacterium bovis (strain ATCC BAA-935 / AF2122/97)).